The sequence spans 257 residues: S-methyl-5'-thioadenosine phosphorylase (257 aa).

Residues S10 and 50–51 (RH) contribute to the phosphate site. A substrate-binding site is contributed by M180. T181 contacts phosphate. Position 204–206 (204–206 (DYD)) interacts with substrate.

The protein belongs to the PNP/MTAP phosphorylase family. MTAP subfamily. In terms of assembly, homohexamer. Dimer of a homotrimer.

The enzyme catalyses S-methyl-5'-thioadenosine + phosphate = 5-(methylsulfanyl)-alpha-D-ribose 1-phosphate + adenine. It functions in the pathway amino-acid biosynthesis; L-methionine biosynthesis via salvage pathway; S-methyl-5-thio-alpha-D-ribose 1-phosphate from S-methyl-5'-thioadenosine (phosphorylase route): step 1/1. Catalyzes the reversible phosphorylation of S-methyl-5'-thioadenosine (MTA) to adenine and 5-methylthioribose-1-phosphate. Involved in the breakdown of MTA, a major by-product of polyamine biosynthesis. Responsible for the first step in the methionine salvage pathway after MTA has been generated from S-adenosylmethionine. Has broad substrate specificity with 6-aminopurine nucleosides as preferred substrates. This chain is S-methyl-5'-thioadenosine phosphorylase (mntP), found in Pyrococcus abyssi (strain GE5 / Orsay).